A 421-amino-acid chain; its full sequence is F-box/kelch-repeat protein At1g26930 (421 aa).

Residues 54–73 (TDSSEGEDNGSSSDSGTLIP) are disordered. The F-box domain occupies 70–117 (TLIPGMNRDDSLSCLIRCSRADYCSIASVNRSLRSLIRSGEIYRLRRL). Kelch repeat units follow at residues 114 to 167 (LRRL…LAVG), 169 to 212 (DLLV…SYGE), 213 to 260 (IAVL…FMDG), 261 to 312 (KFYV…MSAA), and 320 to 366 (AVVN…GLAF).

The chain is F-box/kelch-repeat protein At1g26930 from Arabidopsis thaliana (Mouse-ear cress).